The following is a 557-amino-acid chain: Formate--tetrahydrofolate ligase 2 (557 aa).

Residue 66–73 participates in ATP binding; the sequence is TPAGEGKT.

This sequence belongs to the formate--tetrahydrofolate ligase family.

It carries out the reaction (6S)-5,6,7,8-tetrahydrofolate + formate + ATP = (6R)-10-formyltetrahydrofolate + ADP + phosphate. It functions in the pathway one-carbon metabolism; tetrahydrofolate interconversion. This Streptococcus pyogenes serotype M28 (strain MGAS6180) protein is Formate--tetrahydrofolate ligase 2.